Reading from the N-terminus, the 282-residue chain is Aquaporin-6 (282 aa).

Over 1–25 the chain is Cytoplasmic; sequence MDAVEPGGRGWASMLACRLWKAISR. Residues 26 to 46 form a helical membrane-spanning segment; that stretch reads ALFAEFLATGLYVFFGVGSVM. Residues 47-54 are Extracellular-facing; sequence RWPTALPS. Residues 55–73 form a helical membrane-spanning segment; it reads VLQIAITFNLVTAMAVQVT. Topologically, residues 74 to 78 are cytoplasmic; that stretch reads WKASG. Positions 79–88 form an intramembrane region, discontinuously helical; sequence AHANPAVTLA. Positions 82–84 match the NPA 1 motif; the sequence is NPA. Over 89 to 99 the chain is Cytoplasmic; that stretch reads FLVGSHISLPR. The helical transmembrane segment at 100–121 threads the bilayer; that stretch reads AVAYVAAQLVGATVGAALLYGV. Topologically, residues 122–141 are extracellular; sequence MPGDIRETLGINVVRNSVST. The helical transmembrane segment at 142–162 threads the bilayer; that stretch reads GQAVAVELLLTLQLVLCVFAS. Residues 163 to 168 lie on the Cytoplasmic side of the membrane; that stretch reads TDSRQT. A helical transmembrane segment spans residues 169 to 188; it reads SGSPATMIGISVALGHLIGI. The Extracellular portion of the chain corresponds to 189–192; the sequence is HFTG. Positions 193–205 form an intramembrane region, discontinuously helical; it reads CSMNPARSFGPAI. Positions 196-198 match the NPA 2 motif; it reads NPA. The Extracellular segment spans residues 206–213; it reads IIGKFTVH. Residues 214–234 traverse the membrane as a helical segment; sequence WVFWVGPLMGALLASLIYNFV. The Cytoplasmic segment spans residues 235–282; it reads LFPDTKTLAQRLAILTGTVEVGTGAGAGAEPLKKESQPGSGAVEMESV. The tract at residues 260-282 is disordered; sequence GAGAEPLKKESQPGSGAVEMESV.

It belongs to the MIP/aquaporin (TC 1.A.8) family. Homotetramer; each monomer provides an independent solute pore.

The protein localises to the cytoplasmic vesicle membrane. It carries out the reaction nitrate(in) = nitrate(out). The catalysed reaction is iodide(out) = iodide(in). The enzyme catalyses bromide(in) = bromide(out). It catalyses the reaction chloride(in) = chloride(out). It carries out the reaction Na(+)(in) = Na(+)(out). The catalysed reaction is H2O(in) = H2O(out). The enzyme catalyses CO2(out) = CO2(in). It catalyses the reaction NH4(+)(in) = NH4(+)(out). In terms of biological role, aquaporins form homotetrameric transmembrane channels, with each monomer independently mediating water transport across the plasma membrane along its osmotic gradient. Unlike classical aquaporins, AQP6 is an intracellular channel with selective anion permeability, particularly for nitrate, and exhibits very low water permeability. It may also facilitate the transport of gases, such as CO2 and NH4(+), as demonstrated in vitro. This is Aquaporin-6 from Homo sapiens (Human).